The sequence spans 366 residues: 3-isopropylmalate dehydrogenase (366 aa).

78 to 91 serves as a coordination point for NAD(+); sequence GPQWTHLKGSESPE. Residues Arg-99, Arg-109, Arg-138, and Asp-227 each coordinate substrate. Mg(2+) is bound by residues Asp-227, Asp-251, and Asp-255. 285-297 serves as a coordination point for NAD(+); that stretch reads GSAPDIAEKNIAN.

Belongs to the isocitrate and isopropylmalate dehydrogenases family. LeuB type 1 subfamily. Homodimer. It depends on Mg(2+) as a cofactor. Mn(2+) is required as a cofactor.

The protein resides in the cytoplasm. The enzyme catalyses (2R,3S)-3-isopropylmalate + NAD(+) = 4-methyl-2-oxopentanoate + CO2 + NADH. The protein operates within amino-acid biosynthesis; L-leucine biosynthesis; L-leucine from 3-methyl-2-oxobutanoate: step 3/4. Functionally, catalyzes the oxidation of 3-carboxy-2-hydroxy-4-methylpentanoate (3-isopropylmalate) to 3-carboxy-4-methyl-2-oxopentanoate. The product decarboxylates to 4-methyl-2 oxopentanoate. This is 3-isopropylmalate dehydrogenase from Blochmanniella pennsylvanica (strain BPEN).